The following is a 132-amino-acid chain: Amicyanin (132 aa).

The first 26 residues, 1-26 (MISAKTLRPAIAAIALFAIGATGAWA), serve as a signal peptide directing secretion. Gln-27 is subject to Pyrrolidone carboxylic acid. The 106-residue stretch at 27 to 132 (QDKITVTSEK…PFMRGKVIVE (106 aa)) folds into the Plastocyanin-like domain. Residues His-80, Cys-119, His-122, and Met-125 each contribute to the Cu cation site.

It depends on Cu cation as a cofactor.

The protein resides in the periplasm. It functions in the pathway one-carbon metabolism; methylamine degradation. Functionally, primary acceptor of electrons from methylamine dehydrogenase. Passes those electrons on either a soluble cytochrome c or to pseudoazurin. This chain is Amicyanin (mauC), found in Paracoccus versutus (Thiobacillus versutus).